Reading from the N-terminus, the 63-residue chain is Large ribosomal subunit protein uL29 (63 aa).

This sequence belongs to the universal ribosomal protein uL29 family.

The protein is Large ribosomal subunit protein uL29 of Erwinia tasmaniensis (strain DSM 17950 / CFBP 7177 / CIP 109463 / NCPPB 4357 / Et1/99).